The sequence spans 324 residues: Polycomb complex protein BMI-1 (324 aa).

An RING-type zinc finger spans residues 18–57 (CVLCGGYFIDATTIIECLHSFCKTCIVRYLETSKYCPICD). Residues 81–95 (KLVPGLFKNEMKRRR) carry the Nuclear localization signal motif. The interval 160–180 (RYLRCPAAMTVMHLRKFLRSK) is interaction with PHC2. Positions 162-226 (LRCPAAMTVM…GPLPLKYRVR (65 aa)) are interaction with E4F1. Residues 232–324 (MKMSHQRDGL…LNGSSATSSG (93 aa)) are disordered. Residues 264 to 276 (PSTSSCLPSPSTP) show a composition bias toward low complexity. Over residues 277–307 (VQSPHPQFPHISSTMNGTSNSPSANHQSSFA) the composition is skewed to polar residues. The span at 313 to 324 (SSLNGSSATSSG) shows a compositional bias: low complexity.

As to quaternary structure, component of a PRC1-like complex. Identified in a PRC1-like HPRC-H complex with CBX2, CBX4, CBX8, PHC1, PHC2, PHC3, RING1 and RNF2. Interacts with RNF2/RING2. Interacts with RING1. Part of a complex that contains RNF2, UB2D3 and BMI1, where RNF2 and BMI1 form a tight heterodimer, and UB2D3 interacts only with RNF2. The complex composed of RNF2, UB2D3 and BMI1 binds nucleosomes, and has activity only with nucleosomal histone H2A. Interacts with CBX7 and CBX8. Interacts with SPOP. Part of a complex consisting of BMI1, CUL3 and SPOP. Interacts with E4F1. Interacts with PHC2. Interacts with zinc finger protein ZNF277. May be part of a complex including at least ZNF277, BMI1 and RNF2/RING2. Post-translationally, may be polyubiquitinated; which does not lead to proteasomal degradation. Monoubiquitinated. In terms of tissue distribution, detected in most organs with high expression levels in thymus, heart, brain and testis.

It localises to the nucleus. It is found in the cytoplasm. Its function is as follows. Component of a Polycomb group (PcG) multiprotein PRC1-like complex, a complex class required to maintain the transcriptionally repressive state of many genes, including Hox genes, throughout development. PcG PRC1 complex acts via chromatin remodeling and modification of histones; it mediates monoubiquitination of histone H2A 'Lys-119', rendering chromatin heritably changed in its expressibility. The complex composed of RNF2, UB2D3 and BMI1 binds nucleosomes, and has activity only with nucleosomal histone H2A. In the PRC1-like complex, regulates the E3 ubiquitin-protein ligase activity of RNF2/RING2. This Mus musculus (Mouse) protein is Polycomb complex protein BMI-1 (Bmi1).